A 418-amino-acid polypeptide reads, in one-letter code: Triacylglycerol lipase 2 (418 aa).

Positions 1–31 are cleaved as a signal peptide; sequence MAGSVMVPSVSIGLALSVLIFFALSLKTLEA. The N-linked (GlcNAc...) asparagine glycan is linked to asparagine 158. The Nucleophile role is filled by serine 190. N-linked (GlcNAc...) asparagine glycans are attached at residues asparagine 286 and asparagine 342. Catalysis depends on charge relay system residues aspartate 360 and histidine 393.

The protein belongs to the AB hydrolase superfamily. Lipase family.

The protein localises to the secreted. The enzyme catalyses a triacylglycerol + H2O = a diacylglycerol + a fatty acid + H(+). Its function is as follows. Triacylglycerol (TAG) lipase. May be involved for TAG storage breakdown during seed germination. In Arabidopsis thaliana (Mouse-ear cress), this protein is Triacylglycerol lipase 2 (LIP2).